The chain runs to 466 residues: 3-isopropylmalate dehydratase large subunit (466 aa).

[4Fe-4S] cluster contacts are provided by Cys347, Cys407, and Cys410.

The protein belongs to the aconitase/IPM isomerase family. LeuC type 1 subfamily. As to quaternary structure, heterodimer of LeuC and LeuD. [4Fe-4S] cluster is required as a cofactor.

It catalyses the reaction (2R,3S)-3-isopropylmalate = (2S)-2-isopropylmalate. It participates in amino-acid biosynthesis; L-leucine biosynthesis; L-leucine from 3-methyl-2-oxobutanoate: step 2/4. In terms of biological role, catalyzes the isomerization between 2-isopropylmalate and 3-isopropylmalate, via the formation of 2-isopropylmaleate. In Escherichia coli O9:H4 (strain HS), this protein is 3-isopropylmalate dehydratase large subunit.